The sequence spans 137 residues: Phosphatidylinositol N-acetylglucosaminyltransferase subunit P (137 aa).

The next 2 helical transmembrane spans lie at 16-36 and 58-78; these read VYGFVGSISIVVATVIFLIWG and MAMPMYSMVTLLVALVFYIGL.

Belongs to the PIGP family.

Its subcellular location is the membrane. It catalyses the reaction a 1,2-diacyl-sn-glycero-3-phospho-(1D-myo-inositol) + UDP-N-acetyl-alpha-D-glucosamine = a 6-(N-acetyl-alpha-D-glucosaminyl)-1-(1,2-diacyl-sn-glycero-3-phospho)-1D-myo-inositol + UDP + H(+). It functions in the pathway glycolipid biosynthesis; glycosylphosphatidylinositol-anchor biosynthesis. Functionally, part of the complex catalyzing the transfer of N-acetylglucosamine from UDP-N-acetylglucosamine to phosphatidylinositol, the first step of GPI biosynthesis. The chain is Phosphatidylinositol N-acetylglucosaminyltransferase subunit P from Arabidopsis thaliana (Mouse-ear cress).